Here is a 220-residue protein sequence, read N- to C-terminus: RING-H2 finger protein ATL77 (220 aa).

A helical membrane pass occupies residues 53-73 (LMLLSILLCGIICSLGLHYII). The RING-type; atypical zinc finger occupies 130–172 (CVICLSDFVAGEQLRVLPKCNHGFHLRCIDKWLTQHMTCPKCR).

The protein belongs to the RING-type zinc finger family. ATL subfamily.

The protein localises to the membrane. The catalysed reaction is S-ubiquitinyl-[E2 ubiquitin-conjugating enzyme]-L-cysteine + [acceptor protein]-L-lysine = [E2 ubiquitin-conjugating enzyme]-L-cysteine + N(6)-ubiquitinyl-[acceptor protein]-L-lysine.. The protein operates within protein modification; protein ubiquitination. This chain is RING-H2 finger protein ATL77 (ATL77), found in Arabidopsis thaliana (Mouse-ear cress).